The following is an 850-amino-acid chain: Protein STB2 (850 aa).

Phosphoserine is present on residues Ser594 and Ser625.

This sequence to yeast STB6. In terms of assembly, interacts with SIN3.

This is Protein STB2 (STB2) from Saccharomyces cerevisiae (strain ATCC 204508 / S288c) (Baker's yeast).